A 300-amino-acid polypeptide reads, in one-letter code: Acetyl-coenzyme A carboxylase carboxyl transferase subunit beta (300 aa).

In terms of domain architecture, CoA carboxyltransferase N-terminal spans 24-293; it reads LWTNCESCSQ…NAPGAALGGA (270 aa). Positions 28, 31, 47, and 50 each coordinate Zn(2+). The C4-type zinc-finger motif lies at 28–50; the sequence is CESCSQMILVKDLQKAMNVCPHC.

It belongs to the AccD/PCCB family. As to quaternary structure, acetyl-CoA carboxylase is a heterohexamer composed of biotin carboxyl carrier protein (AccB), biotin carboxylase (AccC) and two subunits each of ACCase subunit alpha (AccA) and ACCase subunit beta (AccD). Zn(2+) is required as a cofactor.

It is found in the cytoplasm. It carries out the reaction N(6)-carboxybiotinyl-L-lysyl-[protein] + acetyl-CoA = N(6)-biotinyl-L-lysyl-[protein] + malonyl-CoA. The protein operates within lipid metabolism; malonyl-CoA biosynthesis; malonyl-CoA from acetyl-CoA: step 1/1. In terms of biological role, component of the acetyl coenzyme A carboxylase (ACC) complex. Biotin carboxylase (BC) catalyzes the carboxylation of biotin on its carrier protein (BCCP) and then the CO(2) group is transferred by the transcarboxylase to acetyl-CoA to form malonyl-CoA. This is Acetyl-coenzyme A carboxylase carboxyl transferase subunit beta from Gluconacetobacter diazotrophicus (strain ATCC 49037 / DSM 5601 / CCUG 37298 / CIP 103539 / LMG 7603 / PAl5).